A 996-amino-acid chain; its full sequence is P3N-PIPO polyprotein (996 aa).

The Peptidase S30 domain occupies 173 to 313 (VVRSASVNNL…VFFYDDVDHY (141 aa)). Catalysis depends on for P1 proteinase activity residues His-226, Glu-235, and Ser-267. The short motif at 365 to 368 (KLSC) is the Involved in interaction with stylet and aphid transmission element. The Involved in virions binding and aphid transmission signature appears at 621 to 623 (PTK). Residues 647–769 (MYIAKEGYCY…QSEMKHYRVG (123 aa)) enclose the Peptidase C6 domain. Residues Cys-655 and His-728 each act as for helper component proteinase activity in the active site.

This sequence belongs to the potyviridae P3N-PIPO polyprotein family. As to quaternary structure, interacts (via PIPO domain) with host PCaP1 protein; this interaction may help to anchor the movement complex to the plasma membrane from which the complex could move to the plasmodesmata. Potyviral RNA is expressed as two polyproteins which undergo post-translational proteolytic processing. Genome polyprotein is processed by NIa-pro, P1 and HC-pro proteinases resulting in the production of at least ten individual proteins. P3N-PIPO is cleaved by P1 and HC-pro proteinases resulting in the production of three individual proteins. The P1 proteinase and the HC-pro cleave only their respective C-termini autocatalytically.

Its subcellular location is the host cell junction. The protein resides in the host plasmodesma. It catalyses the reaction Hydrolyzes a Gly-|-Gly bond at its own C-terminus, commonly in the sequence -Tyr-Xaa-Val-Gly-|-Gly, in the processing of the potyviral polyprotein.. In terms of biological role, required for aphid transmission and also has proteolytic activity. Only cleaves a Gly-Gly dipeptide at its own C-terminus. Interacts with virions and aphid stylets. Acts as a suppressor of RNA-mediated gene silencing, also known as post-transcriptional gene silencing (PTGS), a mechanism of plant viral defense that limits the accumulation of viral RNAs. May have RNA-binding activity. Functionally, allows efficient cell to cell propagation, by bypassing the host cell wall barrier. Transports viral genome to neighboring plant cells directly through plasmosdesmata, without any budding. In Zucchini yellow mosaic virus (strain Reunion Island) (ZYMV), this protein is P3N-PIPO polyprotein.